Reading from the N-terminus, the 635-residue chain is Threonine--tRNA ligase (635 aa).

Residues 1–61 (MIKITLKDGK…HKDSSLEILT (61 aa)) enclose the TGS domain. The catalytic stretch occupies residues 242-532 (DHRKLGKELD…LIEQYAGAFP (291 aa)). Zn(2+) contacts are provided by cysteine 333, histidine 384, and histidine 509.

The protein belongs to the class-II aminoacyl-tRNA synthetase family. In terms of assembly, homodimer. Zn(2+) serves as cofactor.

The protein localises to the cytoplasm. The catalysed reaction is tRNA(Thr) + L-threonine + ATP = L-threonyl-tRNA(Thr) + AMP + diphosphate + H(+). Catalyzes the attachment of threonine to tRNA(Thr) in a two-step reaction: L-threonine is first activated by ATP to form Thr-AMP and then transferred to the acceptor end of tRNA(Thr). Also edits incorrectly charged L-seryl-tRNA(Thr). This is Threonine--tRNA ligase from Clostridium botulinum (strain ATCC 19397 / Type A).